A 3916-amino-acid polypeptide reads, in one-letter code: Fusarin C synthetase (3916 aa).

A Ketosynthase family 3 (KS3) domain is found at 9–440 (KEPIAIIGTS…GTNVHAIIEQ (432 aa)). Catalysis depends on for beta-ketoacyl synthase activity residues Cys182, His319, and His360. The tract at residues 548–869 (VFTGQGAQWP…VTRNIHDVEA (322 aa)) is malonyl-CoA:ACP transacylase (MAT) domain. The segment at 935–1068 (HPLLGARSVE…GQLRVEFSSL (134 aa)) is N-terminal hotdog fold. Residues 935–1228 (HPLLGARSVE…GLTCTSLLRP (294 aa)) form a dehydratase (DH) domain region. The PKS/mFAS DH domain maps to 935–1231 (HPLLGARSVE…CTSLLRPGPS (297 aa)). His967 functions as the Proton acceptor; for dehydratase activity in the catalytic mechanism. Positions 1084–1231 (LTSVDMERFY…CTSLLRPGPS (148 aa)) are C-terminal hotdog fold. Residue Asp1141 is the Proton donor; for dehydratase activity of the active site. Residues 1350–1584 (VGENLPAVVR…YMTSVMLSQA (235 aa)) are C-methyltransferase (CMeT) domain. The interval 2092 to 2266 (TYLLIGFTGG…AASVMHIGMV (175 aa)) is ketoreductase (KR) domain 1. The region spanning 2372–2449 (EILAVVEEEF…ELCSTVVSHL (78 aa)) is the Carrier 1 domain. Ser2409 is subject to O-(pantetheine 4'-phosphoryl)serine. The tract at residues 2482–2511 (ASPTENEPFTIRNSPNSTQVTSESGVDEET) is disordered. Over residues 2486–2505 (ENEPFTIRNSPNSTQVTSES) the composition is skewed to polar residues. The interval 2522–2806 (PLSFAQERLW…VNLLPLRLKL (285 aa)) is condensation. The adenylation stretch occupies residues 2973–3385 (FEKCVVNQPD…RIAGDSQIKL (413 aa)). Residues 3493 to 3570 (KPLTETQERL…EMAAKIDGFT (78 aa)) form the Carrier 2 domain. At Ser3530 the chain carries O-(pantetheine 4'-phosphoryl)serine. Positions 3612–3833 (LTGATGFLGV…DFVPVDVVAA (222 aa)) are thiolester reductase (R) domain.

This sequence in the C-terminal section; belongs to the NRP synthetase family.

It functions in the pathway mycotoxin biosynthesis. Functionally, fusarin C synthetase; part of the gene cluster that mediates the biosynthesis of the mycotoxin fusarin C. Within the cluster, FUS1, FUS2, FUS8 and FUS9 are sufficient for fusarin production. The roles of the other FUS members are yet undetermined. The fusarin C synthetase FUS1 is responsible for the condensation of one acetyl-coenzyme A (CoA) unit with six malonyl-CoA units and the amide linkage of the arising heptaketide and homoserine, subsequently releasing the first intermediate, prefusarin, as an alcohol with an open ring structure. The cytochrome P450 monooxygenase FUS8 participates in multiple oxidation processes at carbon C-20 and is able to use the FUS1 product as substrate, resulting in formation of 20-hydroxy-prefusarin. This reaction seems to be essential before the 2-pyrrolidone ring closure can be catalyzed by FUS2, generating 20-hydroxy-fusarin. FUS8 is able to further oxidizes carbon C-20 after ring closure, resulting in the formation of carboxy-fusarin C. As the last step, FUS9 methylates the hydroxyl group at C-21 to generate fusarin C. Fusarin C can then rearrange to epi-fusarin C, the (z)-isomers, and fusarin A and fusarin D. This chain is Fusarin C synthetase, found in Gibberella moniliformis (strain M3125 / FGSC 7600) (Maize ear and stalk rot fungus).